The following is a 71-amino-acid chain: UPF0352 protein Spea_1764 (71 aa).

Belongs to the UPF0352 family.

In Shewanella pealeana (strain ATCC 700345 / ANG-SQ1), this protein is UPF0352 protein Spea_1764.